The primary structure comprises 547 residues: Fimbria adhesin EcpD (547 aa).

The N-terminal stretch at 1–20 is a signal peptide; sequence MRVNLLIAMIIFALIWPATA.

It belongs to the EcpD/MatE family. In terms of assembly, forms polymers. Interacts with EcpA.

The protein localises to the fimbrium. Part of the ecpRABCDE operon, which encodes the E.coli common pilus (ECP). ECP is found in both commensal and pathogenic strains and plays a dual role in early-stage biofilm development and host cell recognition. Tip pilus adhesin, which is required for assembly of EcpA into fibers. The sequence is that of Fimbria adhesin EcpD (ecpD) from Escherichia coli O18:K1:H7 (strain IHE3034 / ExPEC).